Consider the following 94-residue polypeptide: MKITDVRVRHVSSDSRLKGVVTITFEDAFVVHDIRVIEGENGLFVAMPSKKMPNGGFRDIAHPIHADMRKQIEDSIIKAYKETLDAEATASVEE.

This sequence belongs to the SpoVG family.

Could be involved in septation. The sequence is that of Putative septation protein SpoVG from Acholeplasma laidlawii (strain PG-8A).